The chain runs to 124 residues: Putative membrane protein insertion efficiency factor (124 aa).

The protein belongs to the UPF0161 family.

It is found in the cell inner membrane. In terms of biological role, could be involved in insertion of integral membrane proteins into the membrane. In Psychrobacter cryohalolentis (strain ATCC BAA-1226 / DSM 17306 / VKM B-2378 / K5), this protein is Putative membrane protein insertion efficiency factor.